Consider the following 941-residue polypeptide: Probable respiratory burst oxidase homolog protein I (941 aa).

Over 1–374 (MSMSFSGGTH…LYSLQDNWKR (374 aa)) the chain is Cytoplasmic. Disordered stretches follow at residues 29–48 (PSLPATYSPSPSSSSSSGEE) and 103–166 (ERLT…SGTE). Low complexity predominate over residues 36–45 (SPSPSSSSSS). Over residues 103–117 (ERLTAGTNSKQQIQK) the composition is skewed to polar residues. EF-hand-like stretches follow at residues 196-204 (SKDGYLFKS) and 232-243 (RRIMVDKINLQE). An EF-hand domain is found at 254–289 (ESFDSRLQIFFNMVKNGDGRITENEVKEIIILSASA). Ca(2+)-binding residues include asparagine 269, aspartate 271, arginine 273, and glutamate 278. Phosphoserine is present on residues serine 346 and serine 350. A helical membrane pass occupies residues 375-395 (IWVLTLWFVIMAWLFMWKCYQ). The Extracellular portion of the chain corresponds to 396–407 (YKHKDAFHVMGY). A helical membrane pass occupies residues 408 to 428 (CLVMAKGAAETLKFNMALILL). A Ferric oxidoreductase domain is found at 413–570 (KGAAETLKFN…LLLTVYVLLV (158 aa)). Over 429-514 (PVCRNTITYL…YFGLVNTPVG (86 aa)) the chain is Cytoplasmic. The helical transmembrane segment at 515-535 (ITGIIMVAFMLIAFTLASRRC) threads the bilayer. Topologically, residues 536–557 (RRNLTKLPKPFDKLTGYNAFWY) are extracellular. A helical membrane pass occupies residues 558 to 578 (SHHLLLTVYVLLVIHGVSLYL). Topologically, residues 579–586 (EHKWYRKT) are cytoplasmic. The chain crosses the membrane as a helical span at residues 587–604 (VWMYLAVPVLLYVGERIF). Topologically, residues 605 to 731 (RFFRSRLYTV…PYGAPAQDHW (127 aa)) are extracellular. Positions 609-729 (SRLYTVEICK…DGPYGAPAQD (121 aa)) constitute an FAD-binding FR-type domain. Residues 732–752 (KYDVVLLVGLGIGATPFVSIL) form a helical membrane-spanning segment. The Cytoplasmic portion of the chain corresponds to 753–941 (RDLLNNIIKQ…TRFDFHKEQF (189 aa)).

It belongs to the RBOH (TC 5.B.1.3) family. In terms of assembly, monomer and homodimer.

It is found in the membrane. Calcium-dependent NADPH oxidase that generates superoxide. The protein is Probable respiratory burst oxidase homolog protein I (RBOHI) of Arabidopsis thaliana (Mouse-ear cress).